Consider the following 431-residue polypeptide: Serine/threonine-protein kinase Sgk1 (431 aa).

A necessary for localization to the mitochondria region spans residues 1–60 (MTVKTEAARDTLTYSRMRGMVAILIAFMKQRRMGLNDFIQKIANNSYACKHPEVQSILKI). Residues 64 to 92 (QEPELMNANPSPPPSPSQQINLGPSSNPH) are disordered. Position 74 is a phosphoserine (Ser-74). Phosphoserine; by MAPK7 is present on Ser-78. Polar residues predominate over residues 81–91 (QQINLGPSSNP). A Protein kinase domain is found at 98–355 (FHFLKVIGKG…FMEIKNHVFF (258 aa)). Residues 104–112 (IGKGSFGKV) and Lys-127 each bind ATP. The Nuclear localization signal motif lies at 131–141 (KKAILKKKEEK). The Proton acceptor role is filled by Asp-222. Thr-256 carries the phosphothreonine; by PDPK1 modification. Positions 356–431 (SLINWEDLIN…SYAPPMDSFL (76 aa)) constitute an AGC-kinase C-terminal domain. Thr-369 carries the phosphothreonine; by PKA modification. 3 positions are modified to phosphoserine: Ser-397, Ser-401, and Ser-422.

This sequence belongs to the protein kinase superfamily. AGC Ser/Thr protein kinase family. Homodimer; disulfide-linked. Forms a trimeric complex with FBXW7 and NOTCH1. Interacts with MAPK3/ERK1, MAPK1/ERK2, MAP2K1/MEK1, MAP2K2/MEK2, NEDD4, NEDD4L, MAPT/TAU, MAPK7, CREB1, SLC9A3R2/NHERF2 and KCNJ1/ROMK1. Associates with the mammalian target of rapamycin complex 2 (mTORC2) via an interaction with MAPKAP1/SIN1. Post-translationally, regulated by phosphorylation. Activated by phosphorylation on Ser-422 by mTORC2, transforming it into a substrate for PDPK1 which phosphorylates it on Thr-256. Phosphorylation on Ser-397 and Ser-401 are also essential for its activity. Phosphorylation on Ser-78 by MAPK7 is required for growth factor-induced cell cycle progression. Ubiquitinated by NEDD4L; which promotes proteasomal degradation. Ubiquitinated by SYVN1 at the endoplasmic reticulum; which promotes rapid proteasomal degradation and maintains a high turnover rate in resting cells.

The protein resides in the cytoplasm. It localises to the nucleus. The protein localises to the endoplasmic reticulum membrane. Its subcellular location is the cell membrane. It is found in the mitochondrion. It carries out the reaction L-seryl-[protein] + ATP = O-phospho-L-seryl-[protein] + ADP + H(+). The enzyme catalyses L-threonyl-[protein] + ATP = O-phospho-L-threonyl-[protein] + ADP + H(+). Two specific sites, one in the kinase domain (Thr-256) and the other in the C-terminal regulatory region (Ser-422), need to be phosphorylated for its full activation. Phosphorylation at Ser-397 and Ser-401 are also essential for its activity. Activated by WNK1, WNK2, WNK3 and WNK4; which promote phosphorylation by mTORC2. Its function is as follows. Serine/threonine-protein kinase which is involved in the regulation of a wide variety of ion channels, membrane transporters, cellular enzymes, transcription factors, neuronal excitability, cell growth, proliferation, survival, migration and apoptosis. Plays an important role in cellular stress response. Contributes to regulation of renal Na(+) retention, renal K(+) elimination, salt appetite, gastric acid secretion, intestinal Na(+)/H(+) exchange and nutrient transport, insulin-dependent salt sensitivity of blood pressure, salt sensitivity of peripheral glucose uptake, cardiac repolarization and memory consolidation. Up-regulates Na(+) channels: SCNN1A/ENAC, SCN5A and ASIC1/ACCN2, K(+) channels: KCNJ1/ROMK1, KCNA1-5, KCNQ1-5 and KCNE1, epithelial Ca(2+) channels: TRPV5 and TRPV6, chloride channels: BSND, CLCN2 and CFTR, glutamate transporters: SLC1A3/EAAT1, SLC1A2 /EAAT2, SLC1A1/EAAT3, SLC1A6/EAAT4 and SLC1A7/EAAT5, amino acid transporters: SLC1A5/ASCT2, SLC38A1/SN1 and SLC6A19, creatine transporter: SLC6A8, Na(+)/dicarboxylate cotransporter: SLC13A2/NADC1, Na(+)-dependent phosphate cotransporter: SLC34A2/NAPI-2B, glutamate receptor: GRIK2/GLUR6. Up-regulates carriers: SLC9A3/NHE3, SLC12A1/NKCC2, SLC12A3/NCC, SLC5A3/SMIT, SLC2A1/GLUT1, SLC5A1/SGLT1 and SLC15A2/PEPT2. Regulates enzymes: GSK3A/B, PMM2 and Na(+)/K(+) ATPase, and transcription factors: CTNNB1 and nuclear factor NF-kappa-B. Stimulates sodium transport into epithelial cells by enhancing the stability and expression of SCNN1A/ENAC. This is achieved by phosphorylating the NEDD4L ubiquitin E3 ligase, promoting its interaction with 14-3-3 proteins, thereby preventing it from binding to SCNN1A/ENAC and targeting it for degradation. Regulates store-operated Ca(+2) entry (SOCE) by stimulating ORAI1 and STIM1. Regulates KCNJ1/ROMK1 directly via its phosphorylation or indirectly via increased interaction with SLC9A3R2/NHERF2. Phosphorylates MDM2 and activates MDM2-dependent ubiquitination of p53/TP53. Phosphorylates MAPT/TAU and mediates microtubule depolymerization and neurite formation in hippocampal neurons. Phosphorylates SLC2A4/GLUT4 and up-regulates its activity. Phosphorylates APBB1/FE65 and promotes its localization to the nucleus. Phosphorylates MAPK1/ERK2 and activates it by enhancing its interaction with MAP2K1/MEK1 and MAP2K2/MEK2. Phosphorylates FBXW7 and plays an inhibitory role in the NOTCH1 signaling. Phosphorylates FOXO1 resulting in its relocalization from the nucleus to the cytoplasm. Phosphorylates FOXO3, promoting its exit from the nucleus and interference with FOXO3-dependent transcription. Phosphorylates BRAF and MAP3K3/MEKK3 and inhibits their activity. Phosphorylates SLC9A3/NHE3 in response to dexamethasone, resulting in its activation and increased localization at the cell membrane. Phosphorylates CREB1. Necessary for vascular remodeling during angiogenesis. In Bos taurus (Bovine), this protein is Serine/threonine-protein kinase Sgk1 (SGK1).